The chain runs to 277 residues: Thymidylate synthase (277 aa).

Position 21 (Arg21) interacts with dUMP. His51 lines the (6R)-5,10-methylene-5,6,7,8-tetrahydrofolate pocket. Arg139–Arg140 contributes to the dUMP binding site. The active-site Nucleophile is the Cys159. DUMP contacts are provided by residues Arg179–Asp182, Asn190, and His220–Tyr222. (6R)-5,10-methylene-5,6,7,8-tetrahydrofolate is bound at residue Asp182. Ala276 contacts (6R)-5,10-methylene-5,6,7,8-tetrahydrofolate.

The protein belongs to the thymidylate synthase family. Bacterial-type ThyA subfamily. As to quaternary structure, homodimer.

Its subcellular location is the cytoplasm. The catalysed reaction is dUMP + (6R)-5,10-methylene-5,6,7,8-tetrahydrofolate = 7,8-dihydrofolate + dTMP. Its pathway is pyrimidine metabolism; dTTP biosynthesis. Catalyzes the reductive methylation of 2'-deoxyuridine-5'-monophosphate (dUMP) to 2'-deoxythymidine-5'-monophosphate (dTMP) while utilizing 5,10-methylenetetrahydrofolate (mTHF) as the methyl donor and reductant in the reaction, yielding dihydrofolate (DHF) as a by-product. This enzymatic reaction provides an intracellular de novo source of dTMP, an essential precursor for DNA biosynthesis. The polypeptide is Thymidylate synthase (Roseobacter denitrificans (strain ATCC 33942 / OCh 114) (Erythrobacter sp. (strain OCh 114))).